A 686-amino-acid chain; its full sequence is Solute carrier family 22 member 23 (686 aa).

2 disordered regions span residues 1 to 62 and 169 to 193; these read MAID…GGGP and GNRSNSSGADGGDTPPLPSPPDKGD. N-linked (GlcNAc...) asparagine glycosylation occurs at N24. A run of 2 helical transmembrane segments spans residues 234-254 and 258-278; these read FSLLVGLIFGYLITGCIADWV and PVLLFSIIFILIFGLTVALSV. N-linked (GlcNAc...) asparagine glycosylation is present at N279. 8 helical membrane-spanning segments follow: residues 288–308, 315–335, 344–364, 467–487, 494–514, 538–558, 569–589, and 598–618; these read FFEGFCLAGIILTLYALRIEL, FMITMVASFVAMAGQFLMPGL, VLQALIICPFLLMLLYWSIFP, ADYYTTASIALVSCLAMCVVV, GGLLLFMILTALASLLQLGLL, IAFSIVGMFASHAVGSLSVFF, CGGLGLVLASAGFGMLTAPII, and FLHHIIFACCTLICIICILLL.

Belongs to the major facilitator (TC 2.A.1) superfamily. Organic cation transporter (TC 2.A.1.19) family.

Its subcellular location is the membrane. The protein is Solute carrier family 22 member 23 (SLC22A23) of Homo sapiens (Human).